Here is a 182-residue protein sequence, read N- to C-terminus: MNQTIISAATEGTNPLVPNPWEMGVVLAGFAVLFYIVVKFVVPMFEKTFAERAEAIEGGIAKAEKAQAEASAALEEYKQQLTDARAEANRIREEARAEGAQILADLKEKAAAESARITAHAHAQIESERQAAVVSLRAEVGTLATTLASRIVGESLSDDARAARVVDRFLADLENQNAGAAK.

A helical transmembrane segment spans residues 25–45 (VVLAGFAVLFYIVVKFVVPMF).

Belongs to the ATPase B chain family. In terms of assembly, F-type ATPases have 2 components, F(1) - the catalytic core - and F(0) - the membrane proton channel. F(1) has five subunits: alpha(3), beta(3), gamma(1), delta(1), epsilon(1). F(0) has three main subunits: a(1), b(2) and c(10-14). The alpha and beta chains form an alternating ring which encloses part of the gamma chain. F(1) is attached to F(0) by a central stalk formed by the gamma and epsilon chains, while a peripheral stalk is formed by the delta and b chains.

Its subcellular location is the cell membrane. Its function is as follows. F(1)F(0) ATP synthase produces ATP from ADP in the presence of a proton or sodium gradient. F-type ATPases consist of two structural domains, F(1) containing the extramembraneous catalytic core and F(0) containing the membrane proton channel, linked together by a central stalk and a peripheral stalk. During catalysis, ATP synthesis in the catalytic domain of F(1) is coupled via a rotary mechanism of the central stalk subunits to proton translocation. Component of the F(0) channel, it forms part of the peripheral stalk, linking F(1) to F(0). The protein is ATP synthase subunit b of Arthrobacter sp. (strain FB24).